The chain runs to 792 residues: Endonuclease MutS2 (792 aa).

334 to 341 contributes to the ATP binding site; that stretch reads GPNTGGKT. Residues 717-792 form the Smr domain; sequence IDLRGMMLSE…ENGVTVVELK (76 aa).

It belongs to the DNA mismatch repair MutS family. MutS2 subfamily. Homodimer. Binds to stalled ribosomes, contacting rRNA.

Endonuclease that is involved in the suppression of homologous recombination and thus may have a key role in the control of bacterial genetic diversity. In terms of biological role, acts as a ribosome collision sensor, splitting the ribosome into its 2 subunits. Detects stalled/collided 70S ribosomes which it binds and splits by an ATP-hydrolysis driven conformational change. Acts upstream of the ribosome quality control system (RQC), a ribosome-associated complex that mediates the extraction of incompletely synthesized nascent chains from stalled ribosomes and their subsequent degradation. Probably generates substrates for RQC. The sequence is that of Endonuclease MutS2 from Ruminiclostridium cellulolyticum (strain ATCC 35319 / DSM 5812 / JCM 6584 / H10) (Clostridium cellulolyticum).